We begin with the raw amino-acid sequence, 279 residues long: Ribosomal RNA small subunit methyltransferase A (279 aa).

6 residues coordinate S-adenosyl-L-methionine: asparagine 28, leucine 30, glycine 55, glutamate 77, aspartate 103, and asparagine 122.

It belongs to the class I-like SAM-binding methyltransferase superfamily. rRNA adenine N(6)-methyltransferase family. RsmA subfamily.

The protein resides in the cytoplasm. The catalysed reaction is adenosine(1518)/adenosine(1519) in 16S rRNA + 4 S-adenosyl-L-methionine = N(6)-dimethyladenosine(1518)/N(6)-dimethyladenosine(1519) in 16S rRNA + 4 S-adenosyl-L-homocysteine + 4 H(+). Functionally, specifically dimethylates two adjacent adenosines (A1518 and A1519) in the loop of a conserved hairpin near the 3'-end of 16S rRNA in the 30S particle. May play a critical role in biogenesis of 30S subunits. This is Ribosomal RNA small subunit methyltransferase A from Ruegeria pomeroyi (strain ATCC 700808 / DSM 15171 / DSS-3) (Silicibacter pomeroyi).